Consider the following 616-residue polypeptide: Membrane protein insertase YidC (616 aa).

The helical transmembrane segment at 8-28 (MFVAIALSLVVLLGWHYFVTG) threads the bilayer. The interval 33-85 (RQRQAAQSQTAQTGAPQTADGIPSPSPREGGPNAPAPGTLPGAAAQGPVSRED) is disordered. Low complexity-rich tracts occupy residues 36 to 51 (QAAQ…PQTA) and 62 to 80 (GGPN…AQGP). 4 consecutive transmembrane segments (helical) span residues 386–406 (LLGN…LFFL), 460–480 (WPVL…FITI), 516–536 (YIPI…FIQM), and 551–571 (FAFM…GLVI).

It belongs to the OXA1/ALB3/YidC family. Type 1 subfamily. As to quaternary structure, interacts with the Sec translocase complex via SecD. Specifically interacts with transmembrane segments of nascent integral membrane proteins during membrane integration.

It is found in the cell inner membrane. In terms of biological role, required for the insertion and/or proper folding and/or complex formation of integral membrane proteins into the membrane. Involved in integration of membrane proteins that insert both dependently and independently of the Sec translocase complex, as well as at least some lipoproteins. Aids folding of multispanning membrane proteins. The polypeptide is Membrane protein insertase YidC (Methylorubrum extorquens (strain PA1) (Methylobacterium extorquens)).